Consider the following 320-residue polypeptide: Nicotianamine synthase 3 (320 aa).

It belongs to the nicotianamine synthase (NAS)-like family. As to expression, in shoots.

The enzyme catalyses 3 S-adenosyl-L-methionine = nicotianamine + 3 S-methyl-5'-thioadenosine + 3 H(+). Functionally, synthesizes nicotianamine, a polyamine which serves as a sensor for the physiological iron status within the plant, and/or might be involved in the transport of iron. The protein is Nicotianamine synthase 3 (NAS3) of Arabidopsis thaliana (Mouse-ear cress).